A 121-amino-acid polypeptide reads, in one-letter code: Putative iron-sulfur cluster insertion protein ErpA 1 (121 aa).

Residues Cys49, Cys113, and Cys115 each coordinate iron-sulfur cluster.

This sequence belongs to the HesB/IscA family. As to quaternary structure, homodimer. Iron-sulfur cluster serves as cofactor.

In terms of biological role, required for insertion of 4Fe-4S clusters. The polypeptide is Putative iron-sulfur cluster insertion protein ErpA 1 (Polaromonas naphthalenivorans (strain CJ2)).